A 245-amino-acid chain; its full sequence is 3-dehydroquinate dehydratase (245 aa).

Residues glutamate 35 to arginine 37 and arginine 70 contribute to the 3-dehydroquinate site. Histidine 132 acts as the Proton donor/acceptor in catalysis. Lysine 158 (schiff-base intermediate with substrate) is an active-site residue. 3-dehydroquinate contacts are provided by arginine 199, threonine 220, and glutamine 224.

Belongs to the type-I 3-dehydroquinase family. Homodimer.

It carries out the reaction 3-dehydroquinate = 3-dehydroshikimate + H2O. Its pathway is metabolic intermediate biosynthesis; chorismate biosynthesis; chorismate from D-erythrose 4-phosphate and phosphoenolpyruvate: step 3/7. In terms of biological role, involved in the third step of the chorismate pathway, which leads to the biosynthesis of aromatic amino acids. Catalyzes the cis-dehydration of 3-dehydroquinate (DHQ) and introduces the first double bond of the aromatic ring to yield 3-dehydroshikimate. This is 3-dehydroquinate dehydratase from Haloquadratum walsbyi (strain DSM 16790 / HBSQ001).